The following is a 320-amino-acid chain: Delta-aminolevulinic acid dehydratase (320 aa).

Positions 119, 121, and 129 each coordinate Zn(2+). Lys194 serves as the catalytic Schiff-base intermediate with substrate. 5-aminolevulinate is bound by residues Arg204 and Arg216. Glu232 contributes to the Mg(2+) binding site. The Schiff-base intermediate with substrate role is filled by Lys247. 5-aminolevulinate is bound at residue Ser273.

The protein belongs to the ALAD family. Homooctamer. Zn(2+) is required as a cofactor.

The enzyme catalyses 2 5-aminolevulinate = porphobilinogen + 2 H2O + H(+). Its pathway is porphyrin-containing compound metabolism; protoporphyrin-IX biosynthesis; coproporphyrinogen-III from 5-aminolevulinate: step 1/4. Its function is as follows. Catalyzes an early step in the biosynthesis of tetrapyrroles. Binds two molecules of 5-aminolevulinate per subunit, each at a distinct site, and catalyzes their condensation to form porphobilinogen. This chain is Delta-aminolevulinic acid dehydratase (hemB), found in Methanothermus sociabilis.